The chain runs to 483 residues: Altronate oxidoreductase (483 aa).

18 to 29 (IIQFGEGNFLRA) is an NAD(+) binding site.

The protein belongs to the mannitol dehydrogenase family. UxaB subfamily.

It carries out the reaction D-altronate + NAD(+) = keto-D-tagaturonate + NADH + H(+). Its pathway is carbohydrate metabolism; pentose and glucuronate interconversion. The chain is Altronate oxidoreductase from Yersinia pestis.